The following is an 80-amino-acid chain: U19-lycotoxin-Ls1a (80 aa).

A signal peptide spans 1–22 (MSPKVQALIFIVGLITLLAAHA). Positions 23–34 (QEELSDNIESER) are excised as a propeptide. 4 disulfides stabilise this stretch: Cys-36–Cys-50, Cys-43–Cys-55, Cys-49–Cys-66, and Cys-57–Cys-64.

This sequence belongs to the neurotoxin 02 (plectoxin) family. 05 (U19-lycotoxin) subfamily. In terms of tissue distribution, expressed by the venom gland.

The protein resides in the secreted. The polypeptide is U19-lycotoxin-Ls1a (Lycosa singoriensis (Wolf spider)).